A 166-amino-acid chain; its full sequence is uncharacterized protein (166 aa).

Transmembrane regions (helical) follow at residues 7–27 (VLFK…SLFY), 30–50 (FLFA…YCYI), 69–89 (IETL…KSLL), and 92–112 (NSFF…LVLF).

This sequence to M.jannaschii MJ0795.1 and MJ0785.1.

Its subcellular location is the cell membrane. This is an uncharacterized protein from Methanocaldococcus jannaschii (strain ATCC 43067 / DSM 2661 / JAL-1 / JCM 10045 / NBRC 100440) (Methanococcus jannaschii).